Consider the following 264-residue polypeptide: Acyl-[acyl-carrier-protein]--UDP-N-acetylglucosamine O-acyltransferase (264 aa).

Belongs to the transferase hexapeptide repeat family. LpxA subfamily. Homotrimer.

It is found in the cytoplasm. It catalyses the reaction a (3R)-hydroxyacyl-[ACP] + UDP-N-acetyl-alpha-D-glucosamine = a UDP-3-O-[(3R)-3-hydroxyacyl]-N-acetyl-alpha-D-glucosamine + holo-[ACP]. Its pathway is glycolipid biosynthesis; lipid IV(A) biosynthesis; lipid IV(A) from (3R)-3-hydroxytetradecanoyl-[acyl-carrier-protein] and UDP-N-acetyl-alpha-D-glucosamine: step 1/6. Functionally, involved in the biosynthesis of lipid A, a phosphorylated glycolipid that anchors the lipopolysaccharide to the outer membrane of the cell. The polypeptide is Acyl-[acyl-carrier-protein]--UDP-N-acetylglucosamine O-acyltransferase (Rickettsia conorii (strain ATCC VR-613 / Malish 7)).